A 497-amino-acid polypeptide reads, in one-letter code: 4,4'-diaponeurosporene oxygenase (497 aa).

7–19 (VIGGGLGGISAAI) is a binding site for FAD.

This sequence belongs to the carotenoid/retinoid oxidoreductase family. CrtP subfamily. It depends on FAD as a cofactor.

The catalysed reaction is all-trans-4,4'-diaponeurosporene + 2 AH2 + 2 O2 = 4,4'-diaponeurosporenal + 2 A + 3 H2O. It participates in carotenoid biosynthesis; staphyloxanthin biosynthesis; staphyloxanthin from farnesyl diphosphate: step 3/5. Involved in the biosynthesis of the yellow-orange carotenoid staphyloxanthin, which plays a role in the virulence via its protective function against oxidative stress. Catalyzes the oxidation of the terminal methyl side group of 4,4'-diaponeurosporene to form 4,4'-diaponeurosporen-4-al. The C40 carotenoid lycopene is a poor substrate. The sequence is that of 4,4'-diaponeurosporene oxygenase from Staphylococcus aureus (strain Mu50 / ATCC 700699).